A 635-amino-acid chain; its full sequence is MADASAGGLYQCLTDISRADTSGDYQKALTSANKLIRKYPKETFAFKCKLVAQIQLSQYADALELIRKTPAHQMGHVGFEKAYIHYRQDELDEAIKELNTCDKDDVKALELKAQVFYKQENYQQAYDIYLYLLKNHSDDSDELRRANFLAVQARLEAQGVKQAVAETEDSYSQLYNRACVEIEAEKLPQALESLEKALKTCRKSFEDEDREEDEIEEELDSIRVQKAYVLQRMGQKAEALAIYEKVQAANHPDSSVKATITNNIPAASSDFALPESRKRFKAALQIDQTKLTRRQRLTLMLNNALVLLLSNQREPCKRALEELVAKFGSSKDVALIEATLHFKMGDAEAALKVLAGSDLEQSLARLHVLLNAGRLPEAVGAIRDLPISGKLGASSLLTSTLIAADSRDEAVKELVAASTAKNQTPEALKSILEDLVEVEQQRGNETAATKHLEKLVEKFPEDLQLQCRLVGAYSKTDPKKAESLSAKLFPETMEVDVNVDELEDSDWILYGEKYRQKKEAKSPQTAEIAATRKLKIATKRKRKIRLPKNYNSAVTPDPERWLPRQERSTYKRKRKNREREIGRGTQGSSSANPNVEYVTASPNSPRPLPGPVAEGPRQQRPNFQKQKKKKNASKF.

7 TPR repeats span residues 7–42 (GGLYQCLTDISRADTSGDYQKALTSANKLIRKYPKE), 75–105 (GHVGFEKAYIHYRQDELDEAIKELNTCDKDD), 106–139 (VKALELKAQVFYKQENYQQAYDIYLYLLKNHSDD), 171–204 (YSQLYNRACVEIEAEKLPQALESLEKALKTCRKS), 220–253 (DSIRVQKAYVLQRMGQKAEALAIYEKVQAANHPD), 255–290 (SVKATITNNIPAASSDFALPESRKRFKAALQIDQTK), and 436–469 (VEVEQQRGNETAATKHLEKLVEKFPEDLQLQCRL). A disordered region spans residues 539–635 (KRKRKIRLPK…QKKKKNASKF (97 aa)). Residues 557–569 (DPERWLPRQERST) are compositionally biased toward basic and acidic residues. Residues 625-635 (KQKKKKNASKF) show a composition bias toward basic residues.

Belongs to the SRP72 family. As to quaternary structure, heterodimer with srpa-68. Srpa-68-srpa-72 heterodimer formation is stabilized by the presence of 7SL RNA. Component of a signal recognition particle (SRP) complex that consists of a 7SL RNA molecule of 300 nucleotides and six protein subunits: srpa-72, srpa-68, SRP54, F37F2.2/SRP19, F25G6.8/SRP14 and ZK512.4/SRP9. Within the SRP complex, interacts (via N-terminus) with srpa-68 (via C-terminus).

The protein resides in the cytoplasm. It is found in the endoplasmic reticulum. Component of the signal recognition particle (SRP) complex, a ribonucleoprotein complex that mediates the cotranslational targeting of secretory and membrane proteins to the endoplasmic reticulum (ER). The SRP complex interacts with the signal sequence in nascent secretory and membrane proteins and directs them to the membrane of the ER. The SRP complex targets the ribosome-nascent chain complex to the SRP receptor (SR), which is anchored in the ER, where SR compaction and GTPase rearrangement drive cotranslational protein translocation into the ER. Binds the signal recognition particle RNA (7SL RNA) in presence of srpa-68. Can bind 7SL RNA with low affinity. The SRP complex possibly participates in the elongation arrest function. The sequence is that of Signal recognition particle subunit SRP72 from Caenorhabditis elegans.